Here is a 241-residue protein sequence, read N- to C-terminus: MQCFSFIKTMMILFNLLIFLCGAALLAVGIWVSIDGASFLKIFGPLSSSAMQFVNVGYFLIAAGVVVFALGFLGCYGAKTESKCALMTFFFILLLIFIAEVAAAVVALVYTTMAEHFLTLLVVPAIKKDYGSQEDFTQVWNTTMKGLKCCGFTNYTDFEDSPYLKENHAFPPFCCNDNITNTANDTCTKQKAEDQKVEGCFNQLLYDIRTNAVTVGGVAAGIGGLELAAMIVSMYLYCNLQ.

Residues 1–11 (MQCFSFIKTMM) lie on the Cytoplasmic side of the membrane. The chain crosses the membrane as a helical span at residues 12–34 (ILFNLLIFLCGAALLAVGIWVSI). Residues 35–53 (DGASFLKIFGPLSSSAMQF) lie on the Extracellular side of the membrane. The chain crosses the membrane as a helical span at residues 54–76 (VNVGYFLIAAGVVVFALGFLGCY). Residues 77-88 (GAKTESKCALMT) lie on the Cytoplasmic side of the membrane. Residues 89 to 111 (FFFILLLIFIAEVAAAVVALVYT) form a helical membrane-spanning segment. The Extracellular segment spans residues 112 to 214 (TMAEHFLTLL…LYDIRTNAVT (103 aa)). N141, N154, N178, and N184 each carry an N-linked (GlcNAc...) asparagine glycan. Residues 215 to 237 (VGGVAAGIGGLELAAMIVSMYLY) traverse the membrane as a helical segment. The Cytoplasmic portion of the chain corresponds to 238-241 (CNLQ).

This sequence belongs to the tetraspanin (TM4SF) family. In terms of assembly, interacts with SLC19A2. Interacts with NTRK1/TRKA.

It localises to the lysosome membrane. Structural component of specialized membrane microdomains known as tetraspanin-enriched microdomains (TERMs), which act as platforms for receptor clustering and signaling. Participates thereby in diverse biological functions such as cell signal transduction, adhesion, migration and protein trafficking. Regulates neuronal differentiation in response to NGF by facilitating NGF-mediated activation of NTRK1/TRKA receptor tyrosine kinase and subsequent downstream signaling pathways. Plays a role in the inhibition of TNFalpha-induced apoptosis. Mechanistically, inhibits the NF-kappa-B signaling pathway by blocking phosphorylation of CHUK. Also promotes the stability of the thiamine transporter 1/SLC19A2 in intestinal epithelial cells leading to an increase of thiamine uptake process. The polypeptide is Tetraspanin-1 (TSPAN1) (Pongo abelii (Sumatran orangutan)).